The chain runs to 514 residues: Triacylglyceride transporter MAB_2807 (514 aa).

Transmembrane regions (helical) follow at residues 19–39, 58–78, 88–108, 118–138, 157–177, 178–198, 210–230, 239–259, 278–298, 316–336, and 344–364; these read IAIGAGSLAVLLGALDTYVVV, QVTPIVTGYLLGYIAAMPLLG, LILQLALAGFAIGSVITALST, VIQGVASGALLPVTLALGADL, LGSVLGPLYGVLCVWLFGSWT, AIFWVNVPLAIIAIVLVQFSV, VDVVGGALLAVALGLLVVGLY, LPEWALPVLSGSGVAFLAFIL, PFFAALAASLAAGAALMVTLV, VFLLSRFLVALPIGAVIGGWL, and IIAVIGMLIAAFGYYLISGWP. Residues 371–380 are beta-hairpin; the sequence is VHNFGFFTLP. 3 helical membrane passes run 385 to 405, 420 to 440, and 485 to 505; these read DLVVAGIGLGLVIGPLSSAAL, VVVARMTGMLIGMAALGGWGI, and MFAITAVVCVIAAVIAIFVGS.

This sequence belongs to the major facilitator superfamily. P55 (TC 2.A.1.3.34) family.

Its subcellular location is the cell inner membrane. In terms of biological role, in association with lipoprotein LprG probably transports triacyglycerides (TAG) across the inner cell membrane into the periplasm; TAG probably regulates lipid metabolism and growth regulation and plays a structural role in the outer membrane. TAG (and maybe other lipids) enters the central cavity of the P55 transporter from within the cell inner membrane via clefts on the cytoplasmic face of P55 between TM5-TM8 and TM2-TM11. From there the lipid is probably transferred to the hydrophobic cavity of LprG. Involved in drug susceptibilty, its expression partially complements the antibiotic susceptibilty of a double lprG-mfs deletion. Probably does not function as a bona fide drug efflux pump, but instead plays a role in outer membrane biogenesis. Probably required with LprG for normal surface localization of lipoarabinomannan (LAM). The protein is Triacylglyceride transporter MAB_2807 of Mycobacteroides abscessus (strain ATCC 19977 / DSM 44196 / CCUG 20993 / CIP 104536 / JCM 13569 / NCTC 13031 / TMC 1543 / L948) (Mycobacterium abscessus).